The chain runs to 546 residues: Chaperonin GroEL (546 aa).

Residues 30–33 (TLGP), lysine 51, 87–91 (DGTTT), glycine 415, and aspartate 495 each bind ATP.

Belongs to the chaperonin (HSP60) family. In terms of assembly, forms a cylinder of 14 subunits composed of two heptameric rings stacked back-to-back. Interacts with the co-chaperonin GroES.

It is found in the cytoplasm. It carries out the reaction ATP + H2O + a folded polypeptide = ADP + phosphate + an unfolded polypeptide.. Its function is as follows. Together with its co-chaperonin GroES, plays an essential role in assisting protein folding. The GroEL-GroES system forms a nano-cage that allows encapsulation of the non-native substrate proteins and provides a physical environment optimized to promote and accelerate protein folding. This is Chaperonin GroEL from Brucella melitensis biotype 2 (strain ATCC 23457).